The primary structure comprises 110 residues: Transcription factor S (110 aa).

Residues Cys4, Cys7, Cys22, Cys25, Cys71, Cys74, Cys99, and Cys102 each coordinate Zn(2+). A TFIIS-type zinc finger spans residues 67–107 (TKVTCPKCGNDTAYWWEMQTRAGDEPSTIFYKCTKCGYTWR).

It belongs to the archaeal rpoM/eukaryotic RPA12/RPB9/RPC11 RNA polymerase family.

The protein localises to the chromosome. Functionally, involved in transcriptional proofreading and fidelity. Induces RNA cleavage activity in RNA polymerase (RNAP). Stimulates transcription elongation by RNAP on both naked DNA and histone-bound DNA (chromatin), facilitating transcription through the histone barrier. Stimulation depends on transcript cleavage. In the presence of TFS, the cleavage activity of RNAP truncates RNA back to position +15 in a stepwise manner by releasing mainly dinucleotides from the 3'-end of the nascent RNA. The truncated RNAs are able to continue elongation. Misincorporation of nucleotides during elongation of transcription leads to arrested elongation complexes which are rescued by TFS-promoted removal of a dinucleotide from the 3'-end. TFS is able to induce a cleavage resynthesis cycle in stalled elongation complexes (resulting from the next missing nucleotide or a reduced incorporation rate of a wrong nucleotide) preventing misincorporation and enabling proofreading in a post-incorporation manner. Pausing of elongation complexes is the main determinant of TFS-induced RNA cleavage. In Thermococcus kodakarensis (strain ATCC BAA-918 / JCM 12380 / KOD1) (Pyrococcus kodakaraensis (strain KOD1)), this protein is Transcription factor S.